The following is a 321-amino-acid chain: Cytochrome c biogenesis protein CcsA (321 aa).

Helical transmembrane passes span 9–29 (ILTH…LMTL), 44–64 (GLIA…IYSG), 71–91 (LYES…VPYF), 97–117 (LLST…TSGL), 143–163 (MILS…LLVI), 227–247 (VISL…VWAN), 261–275 (TWAF…IYLH), and 288–308 (AIVA…VNLL).

The protein belongs to the CcmF/CycK/Ccl1/NrfE/CcsA family. As to quaternary structure, may interact with Ccs1.

The protein localises to the plastid. Its subcellular location is the chloroplast thylakoid membrane. Functionally, required during biogenesis of c-type cytochromes (cytochrome c6 and cytochrome f) at the step of heme attachment. This is Cytochrome c biogenesis protein CcsA from Nandina domestica (Heavenly bamboo).